The sequence spans 509 residues: Protein disulfide-isomerase (509 aa).

Residues 1–19 (MLSRSLLCLALAWVARVGA) form the signal peptide. The Thioredoxin 1 domain maps to 20-136 (DAPEEEDNVL…IVNWLKKRTG (117 aa)). Catalysis depends on nucleophile residues Cys-55 and Cys-58. Cysteines 55 and 58 form a disulfide. An N6-acetyllysine modification is found at Lys-202. N6-succinyllysine is present on residues Lys-224 and Lys-273. Ser-333 and Ser-359 each carry phosphoserine. Positions 335–477 (ELTAEKITEF…FKKFLESGGQ (143 aa)) constitute a Thioredoxin 2 domain. Residues Cys-399 and Cys-402 each act as nucleophile in the active site. A disulfide bridge connects residues Cys-399 and Cys-402. Phosphoserine is present on Ser-429. The tract at residues 473-509 (ESGGQDGAGDDDDVDLEEALEPDMEEDDDQKAVKDEL) is disordered. Positions 480-501 (AGDDDDVDLEEALEPDMEEDDD) are enriched in acidic residues. The Prevents secretion from ER signature appears at 506–509 (KDEL).

The protein belongs to the protein disulfide isomerase family. In terms of assembly, heterodimer; heterodimerizes with the protein microsomal triglyceride transfer MTTP. Homodimer. Homodimer. Monomers and homotetramers may also occur. Interacts with P4HA2, forming a heterotetramer consisting of 2 alpha subunits (P4HA2) and 2 beta (P4HB), where P4HB plays the role of a structural subunit; this tetramer catalyzes the formation of 4-hydroxyproline in collagen. Also constitutes the structural subunit of the microsomal triacylglycerol transfer protein MTTP in mammalian cells. Stabilizes both enzymes and retain them in the ER without contributing to the catalytic activity. Binds UBQLN1. Interacts with ERO1B. Interacts with ILDR2. Interacts with ERN1/IRE1A (via N-terminus); the interaction is enhanced by phosphorylation of P4HB by FAM20C in response to endoplasmic reticulum stress and results in attenuation of ERN1 activity. In terms of processing, phosphorylation of Ser-359 by FAM20C is induced by endoplasmic reticulum stress and results in a functional switch from oxidoreductase to molecular chaperone. It also promotes interaction with ERN1.

Its subcellular location is the endoplasmic reticulum. The protein localises to the endoplasmic reticulum lumen. It localises to the melanosome. It is found in the cell membrane. The catalysed reaction is Catalyzes the rearrangement of -S-S- bonds in proteins.. Its function is as follows. This multifunctional protein catalyzes the formation, breakage and rearrangement of disulfide bonds. At the cell surface, seems to act as a reductase that cleaves disulfide bonds of proteins attached to the cell. May therefore cause structural modifications of exofacial proteins. Inside the cell, seems to form/rearrange disulfide bonds of nascent proteins. At high concentrations and following phosphorylation by FAM20C, functions as a chaperone that inhibits aggregation of misfolded proteins. At low concentrations, facilitates aggregation (anti-chaperone activity). May be involved with other chaperones in the structural modification of the TG precursor in hormone biogenesis. Also acts as a structural subunit of various enzymes such as prolyl 4-hydroxylase and microsomal triacylglycerol transfer protein MTTP. Receptor for LGALS9; the interaction retains P4HB at the cell surface of Th2 T helper cells, increasing disulfide reductase activity at the plasma membrane, altering the plasma membrane redox state and enhancing cell migration. This is Protein disulfide-isomerase (P4HB) from Cricetulus griseus (Chinese hamster).